The following is a 153-amino-acid chain: 17.6 kDa class I heat shock protein (153 aa).

The 116-residue stretch at 38 to 153 (ETAAIVNARI…PMVKAIDISG (116 aa)) folds into the sHSP domain.

It belongs to the small heat shock protein (HSP20) family. As to quaternary structure, forms oligomeric structures.

The protein localises to the cytoplasm. The chain is 17.6 kDa class I heat shock protein (HSP17.6) from Helianthus annuus (Common sunflower).